We begin with the raw amino-acid sequence, 157 residues long: Protein Smg homolog (157 aa).

It belongs to the Smg family.

The protein is Protein Smg homolog of Alkalilimnicola ehrlichii (strain ATCC BAA-1101 / DSM 17681 / MLHE-1).